The chain runs to 640 residues: Choline O-acetyltransferase (640 aa).

Residues 1–22 (MPDLEKDMQKKEKDSRSKDEPA) show a composition bias toward basic and acidic residues. The interval 1–28 (MPDLEKDMQKKEKDSRSKDEPAVPKLPV) is disordered. Residue H334 is the Proton acceptor of the active site. CoA contacts are provided by residues 412 to 424 (GKEF…TSPD), S450, and Q551.

This sequence belongs to the carnitine/choline acetyltransferase family. Detected in brain and in embryonic retina.

It carries out the reaction choline + acetyl-CoA = acetylcholine + CoA. In terms of biological role, catalyzes the reversible synthesis of acetylcholine (ACh) from acetyl CoA and choline at cholinergic synapses. In Gallus gallus (Chicken), this protein is Choline O-acetyltransferase (CHAT).